The following is a 645-amino-acid chain: MEQINIQFPDGNKKAFDKGTTTEDIAQSISPGLRKKAVAGKFNGQLVDLTKPLETDGSIEIVTPVSEEALEVLRHSTAHLMAHAIKRLYGNVKFGVGPVIEGGFYYDFDIDQNISSDDFEQIEKTMKQIVNENMKIERKVVSRDEAKELFSNDEYKLELIDAIPEDENVTLYSQGDFTDLCRGVHVPSTAKIKEFKLLSTAGAYWRGDSNNKMLQRIYGTAFFDKKELKAHLQMLEERKERDHRKIGKELELFTNSQLVGAGLPLWLPNGATIRREIERYIVDKEVSMGYDHVYTPVLANVDLYKTSGHWDHYQEDMFPPMQLDETESMVLRPMNCPHHMMIYANKPHSYRELPIRIAELGTMHRYEASGAVSGLQRVRGMTLNDSHIFVRPDQIKEEFKRVVNMIIDVYKDFGFEDYSFRLSYRDPEDKEKYFDDDDMWNKAENMLKEAADELGLSYEEAIGEAAFYGPKLDVQVKTAMGKEETLSTAQLDFLLPERFDLTYIGQDGEHHRPVVIHRGVVSTMERFVAFLTEETKGAFPTWLAPKQVQIIPVNVDLHYDYARQLQDELKSQGVRVSIDDRNEKMGYKIREAQMQKTPYQIVVGDKEVENNQVNVRQYGSQDQETVEKDEFIWNLVDEIRLKKHR.

The TGS domain maps to M1 to T63. The tract at residues D242 to P540 is catalytic. C336, H387, and H517 together coordinate Zn(2+).

The protein belongs to the class-II aminoacyl-tRNA synthetase family. Homodimer. Zn(2+) serves as cofactor.

The protein resides in the cytoplasm. The catalysed reaction is tRNA(Thr) + L-threonine + ATP = L-threonyl-tRNA(Thr) + AMP + diphosphate + H(+). Catalyzes the attachment of threonine to tRNA(Thr) in a two-step reaction: L-threonine is first activated by ATP to form Thr-AMP and then transferred to the acceptor end of tRNA(Thr). Also edits incorrectly charged L-seryl-tRNA(Thr). The polypeptide is Threonine--tRNA ligase (Staphylococcus aureus (strain bovine RF122 / ET3-1)).